The chain runs to 216 residues: Small ribosomal subunit protein uS3c (216 aa).

The 76-residue stretch at isoleucine 43–threonine 118 folds into the KH type-2 domain.

The protein belongs to the universal ribosomal protein uS3 family. Part of the 30S ribosomal subunit.

It localises to the plastid. It is found in the chloroplast. In Phaseolus vulgaris (Kidney bean), this protein is Small ribosomal subunit protein uS3c (rps3).